Here is a 157-residue protein sequence, read N- to C-terminus: Lectin (157 aa).

Residues Cys37 and Cys54 are joined by a disulfide bond.

Homodimer. In terms of tissue distribution, detected in fruits (at protein level).

The protein resides in the secreted. Functionally, binds with high affinity specifically to chito-oligosaccharides. May play a role in plant defense against pathogens by directly binding with the chitin cell wall. Forms filamentous structures at higher concentrations and may promote wound healing by forming filaments with phloem proteins like PP1. The sequence is that of Lectin from Coccinia grandis (Ivy gourd).